A 204-amino-acid chain; its full sequence is MSKIAVLNEKFEKTSEIELPASYAEVNSHNLYLYVKSYLAGIRANSAHTKGRSDVSGGGKKPWRQKGRGGARAGSTRTNVWVGGAVAFGPKNNRNYDQKVNKKQKRLALEFALNDKVANGKFFAVDSIEISSGKTKDAASIINKLGVRDALIIKNELDAKTLLAFRNLANCYVIDASEVNAYLVSVYSAVIAEKAALQSIVKEG.

The interval 48–75 is disordered; that stretch reads HTKGRSDVSGGGKKPWRQKGRGGARAGS.

It belongs to the universal ribosomal protein uL4 family. Part of the 50S ribosomal subunit.

Functionally, one of the primary rRNA binding proteins, this protein initially binds near the 5'-end of the 23S rRNA. It is important during the early stages of 50S assembly. It makes multiple contacts with different domains of the 23S rRNA in the assembled 50S subunit and ribosome. In terms of biological role, forms part of the polypeptide exit tunnel. The protein is Large ribosomal subunit protein uL4 of Campylobacter fetus subsp. fetus (strain 82-40).